Consider the following 271-residue polypeptide: Phosphatidylinositol transfer protein alpha isoform (271 aa).

Positions 59, 61, 86, 90, 97, and 195 each coordinate a 1,2-diacyl-sn-glycero-3-phospho-(1D-myo-inositol). Lysine 216 carries the post-translational modification N6-acetyllysine. A compositionally biased stretch (basic and acidic residues) spans 251 to 264 (TKRQLDEMRQKDPV). The segment at 251–271 (TKRQLDEMRQKDPVKGMTADD) is disordered.

Belongs to the PtdIns transfer protein family. PI transfer class I subfamily. Phosphorylated by PKC in a calcium and phosphatidylserine-dependent manner.

Its subcellular location is the cytoplasm. It is found in the nucleus. It carries out the reaction a 1,2-diacyl-sn-glycero-3-phosphocholine(in) = a 1,2-diacyl-sn-glycero-3-phosphocholine(out). The enzyme catalyses a 1,2-diacyl-sn-glycero-3-phospho-(1D-myo-inositol)(in) = a 1,2-diacyl-sn-glycero-3-phospho-(1D-myo-inositol)(out). Functionally, catalyzes the transfer of phosphatidylinositol (PI) and phosphatidylcholine (PC) between membranes. Shows a preference for PI and PC containing shorter saturated or monosaturated acyl chains at the sn-1 and sn-2 positions. Preference order for PC is C16:1 &gt; C16:0 &gt; C18:1 &gt; C18:0 &gt; C20:4 and for PI is C16:1 &gt; C16:0 &gt; C18:1 &gt; C18:0 &gt; C20:4 &gt; C20:3. The chain is Phosphatidylinositol transfer protein alpha isoform (Pitpna) from Mus musculus (Mouse).